Consider the following 445-residue polypeptide: Phosphoglucosamine mutase (445 aa).

Serine 102 acts as the Phosphoserine intermediate in catalysis. Positions 102, 241, 243, and 245 each coordinate Mg(2+). Residue serine 102 is modified to Phosphoserine.

The protein belongs to the phosphohexose mutase family. Requires Mg(2+) as cofactor. In terms of processing, activated by phosphorylation.

It carries out the reaction alpha-D-glucosamine 1-phosphate = D-glucosamine 6-phosphate. Catalyzes the conversion of glucosamine-6-phosphate to glucosamine-1-phosphate. The protein is Phosphoglucosamine mutase of Aliivibrio fischeri (strain MJ11) (Vibrio fischeri).